The primary structure comprises 1872 residues: Fatty acid synthase beta subunit pkiC (1872 aa).

The acetyltransferase (AT) domain stretch occupies residues V174–R425. The interval N591–D836 is enoyl reductase (ER) domain. A disordered region spans residues T1111–D1132. Residues P1158–I1597 are dehydratase (DH) domain. The region spanning P1518 to E1617 is the MaoC-like domain.

It belongs to the fungal fatty acid synthetase subunit beta family. As to quaternary structure, [Alpha(6)beta(6)] hexamers of two multifunctional subunits (alpha and beta).

The enzyme catalyses acetyl-CoA + n malonyl-CoA + 2n NADPH + 4n H(+) = a long-chain-acyl-CoA + n CoA + n CO2 + 2n NADP(+).. It carries out the reaction holo-[ACP] + acetyl-CoA = acetyl-[ACP] + CoA. It catalyses the reaction holo-[ACP] + malonyl-CoA = malonyl-[ACP] + CoA. The catalysed reaction is a (3R)-hydroxyacyl-[ACP] = a (2E)-enoyl-[ACP] + H2O. The enzyme catalyses a 2,3-saturated acyl-[ACP] + NAD(+) = a (2E)-enoyl-[ACP] + NADH + H(+). It carries out the reaction (9Z)-octadecenoyl-[ACP] + H2O = (9Z)-octadecenoate + holo-[ACP] + H(+). Its pathway is secondary metabolite biosynthesis. Fatty acid synthase beta subunit; part of the pki gene cluster that mediates the biosynthesis of 2,4-dihydroxy-3-methyl-6-(2-oxoundecyl)benzaldehyde. The first step in the pathway is the generation of the decanoyl starter unit by the FAS composed of subunits pkiB and pkiC, which is then transferred directly from the FAS to the SAT domain of the non-reducing polyketide synthase pkiA. PkiA condenses the decanoyyl starter unit with 4 malonyl-CoA units and performs one methylation step to yield 2,4-dihydroxy-3-methyl-6-(2-oxoundecyl)benzaldehyde. This Emericella nidulans (strain FGSC A4 / ATCC 38163 / CBS 112.46 / NRRL 194 / M139) (Aspergillus nidulans) protein is Fatty acid synthase beta subunit pkiC.